The following is a 476-amino-acid chain: Glycogen synthase (476 aa).

K15 contributes to the ADP-alpha-D-glucose binding site.

The protein belongs to the glycosyltransferase 1 family. Bacterial/plant glycogen synthase subfamily.

The catalysed reaction is [(1-&gt;4)-alpha-D-glucosyl](n) + ADP-alpha-D-glucose = [(1-&gt;4)-alpha-D-glucosyl](n+1) + ADP + H(+). It participates in glycan biosynthesis; glycogen biosynthesis. Synthesizes alpha-1,4-glucan chains using ADP-glucose. In Streptococcus equi subsp. equi (strain 4047), this protein is Glycogen synthase.